We begin with the raw amino-acid sequence, 198 residues long: Uracil phosphoribosyltransferase homolog (198 aa).

Belongs to the UPRTase family.

It is found in the plastid. It localises to the chloroplast. In Porphyra purpurea (Red seaweed), this protein is Uracil phosphoribosyltransferase homolog.